The following is a 190-amino-acid chain: Nuclear transcription factor Y subunit B-2 (190 aa).

Positions 1–30 are disordered; the sequence is MGDSDRDSGGGQNGNNQNGQSSLSPREQDR. Residues 32-38 mediate DNA binding; it reads LPIANVS. The subunit association domain (SAD) stretch occupies residues 59–70; that stretch reads MQECVSEFISFV. The disordered stretch occupies residues 168-190; that stretch reads HMYGATGGGSDSGGGAASGRTRT. Gly residues predominate over residues 172–184; sequence ATGGGSDSGGGAA.

The protein belongs to the NFYB/HAP3 subunit family. As to quaternary structure, heterotrimeric transcription factor composed of three components, NF-YA, NF-YB and NF-YC. NF-YB and NF-YC must interact and dimerize for NF-YA association and DNA binding. Binds directly with DPB3-1. As to expression, ubiquitous. Predominantly expressed in flowers and siliques.

It localises to the nucleus. Functionally, component of the NF-Y/HAP transcription factor complex. The NF-Y complex stimulates the transcription of various genes by recognizing and binding to a CCAAT motif in promoters. The chain is Nuclear transcription factor Y subunit B-2 from Arabidopsis thaliana (Mouse-ear cress).